Consider the following 539-residue polypeptide: Hydroxylamine reductase (539 aa).

[4Fe-4S] cluster is bound by residues Cys3, Cys6, Cys14, and Cys20. Hybrid [4Fe-2O-2S] cluster contacts are provided by His232, Glu256, Cys300, Cys392, Cys420, Cys445, Glu480, and Lys482. Cys392 carries the post-translational modification Cysteine persulfide.

Belongs to the HCP family. Requires [4Fe-4S] cluster as cofactor. It depends on hybrid [4Fe-2O-2S] cluster as a cofactor.

It localises to the cytoplasm. The catalysed reaction is A + NH4(+) + H2O = hydroxylamine + AH2 + H(+). Catalyzes the reduction of hydroxylamine to form NH(3) and H(2)O. The polypeptide is Hydroxylamine reductase (Chlorobaculum tepidum (strain ATCC 49652 / DSM 12025 / NBRC 103806 / TLS) (Chlorobium tepidum)).